The primary structure comprises 88 residues: Small ribosomal subunit protein uS19 (88 aa).

This sequence belongs to the universal ribosomal protein uS19 family.

Protein S19 forms a complex with S13 that binds strongly to the 16S ribosomal RNA. This Mycoplasma capricolum subsp. capricolum (strain California kid / ATCC 27343 / NCTC 10154) protein is Small ribosomal subunit protein uS19 (rpsS).